The sequence spans 396 residues: Elongation factor Tu (396 aa).

Residues 10–206 (KPHVNVGTIG…ALDSYIPTPE (197 aa)) form the tr-type G domain. The interval 19–26 (GHVDHGKT) is G1. Residue 19 to 26 (GHVDHGKT) participates in GTP binding. T26 provides a ligand contact to Mg(2+). The G2 stretch occupies residues 60-64 (GITIN). The segment at 81-84 (DCPG) is G3. GTP contacts are provided by residues 81–85 (DCPGH) and 136–139 (NKCD). A G4 region spans residues 136-139 (NKCD). The interval 174-176 (SAK) is G5.

The protein belongs to the TRAFAC class translation factor GTPase superfamily. Classic translation factor GTPase family. EF-Tu/EF-1A subfamily. As to quaternary structure, monomer.

It is found in the cytoplasm. The enzyme catalyses GTP + H2O = GDP + phosphate + H(+). GTP hydrolase that promotes the GTP-dependent binding of aminoacyl-tRNA to the A-site of ribosomes during protein biosynthesis. The chain is Elongation factor Tu from Ralstonia nicotianae (strain ATCC BAA-1114 / GMI1000) (Ralstonia solanacearum).